A 265-amino-acid chain; its full sequence is Type III pantothenate kinase (265 aa).

6 to 13 (DVGNTNIV) lines the ATP pocket. Residues Tyr100 and 107-110 (GADR) contribute to the substrate site. Asp109 acts as the Proton acceptor in catalysis. Residue Asp129 coordinates K(+). Residue Thr132 participates in ATP binding. Thr184 provides a ligand contact to substrate.

This sequence belongs to the type III pantothenate kinase family. As to quaternary structure, homodimer. It depends on NH4(+) as a cofactor. K(+) is required as a cofactor.

It is found in the cytoplasm. The catalysed reaction is (R)-pantothenate + ATP = (R)-4'-phosphopantothenate + ADP + H(+). Its pathway is cofactor biosynthesis; coenzyme A biosynthesis; CoA from (R)-pantothenate: step 1/5. Its function is as follows. Catalyzes the phosphorylation of pantothenate (Pan), the first step in CoA biosynthesis. The sequence is that of Type III pantothenate kinase from Alkaliphilus oremlandii (strain OhILAs) (Clostridium oremlandii (strain OhILAs)).